The chain runs to 346 residues: Phosphate acyltransferase (346 aa).

This sequence belongs to the PlsX family. As to quaternary structure, homodimer. Probably interacts with PlsY.

It is found in the cytoplasm. It carries out the reaction a fatty acyl-[ACP] + phosphate = an acyl phosphate + holo-[ACP]. It participates in lipid metabolism; phospholipid metabolism. Its function is as follows. Catalyzes the reversible formation of acyl-phosphate (acyl-PO(4)) from acyl-[acyl-carrier-protein] (acyl-ACP). This enzyme utilizes acyl-ACP as fatty acyl donor, but not acyl-CoA. This chain is Phosphate acyltransferase, found in Geotalea uraniireducens (strain Rf4) (Geobacter uraniireducens).